Consider the following 332-residue polypeptide: 5-formaminoimidazole-4-carboxamide-1-(beta)-D-ribofuranosyl 5'-monophosphate synthetase (332 aa).

Residues His9 and Ser72 each coordinate 5-amino-1-(5-phospho-beta-D-ribosyl)imidazole-4-carboxamide. The ATP-grasp domain occupies 93 to 323 (RNLFPWESNQ…IGREINLAIQ (231 aa)). Residues 123-183 (PEDV…IPMY) and Glu205 contribute to the ATP site. Asn229 provides a ligand contact to 5-amino-1-(5-phospho-beta-D-ribosyl)imidazole-4-carboxamide. Residues Glu268 and Glu281 each contribute to the Mg(2+) site.

This sequence belongs to the phosphohexose mutase family. The cofactor is Mg(2+). Requires Mn(2+) as cofactor.

It catalyses the reaction 5-amino-1-(5-phospho-beta-D-ribosyl)imidazole-4-carboxamide + formate + ATP = 5-formamido-1-(5-phospho-D-ribosyl)imidazole-4-carboxamide + ADP + phosphate. The protein operates within purine metabolism; IMP biosynthesis via de novo pathway; 5-formamido-1-(5-phospho-D-ribosyl)imidazole-4-carboxamide from 5-amino-1-(5-phospho-D-ribosyl)imidazole-4-carboxamide (formate route): step 1/1. Its function is as follows. Catalyzes the ATP- and formate-dependent formylation of 5-aminoimidazole-4-carboxamide-1-beta-d-ribofuranosyl 5'-monophosphate (AICAR) to 5-formaminoimidazole-4-carboxamide-1-beta-d-ribofuranosyl 5'-monophosphate (FAICAR) in the absence of folates. This chain is 5-formaminoimidazole-4-carboxamide-1-(beta)-D-ribofuranosyl 5'-monophosphate synthetase, found in Metallosphaera sedula (strain ATCC 51363 / DSM 5348 / JCM 9185 / NBRC 15509 / TH2).